A 208-amino-acid polypeptide reads, in one-letter code: Large ribosomal subunit protein uL3 (208 aa).

Residues 116–148 form a disordered region; the sequence is GFQGVIKRHGQSRGPMAHGSRYHRRPGSMGPVA.

The protein belongs to the universal ribosomal protein uL3 family. Part of the 50S ribosomal subunit. Forms a cluster with proteins L14 and L19.

Its function is as follows. One of the primary rRNA binding proteins, it binds directly near the 3'-end of the 23S rRNA, where it nucleates assembly of the 50S subunit. The chain is Large ribosomal subunit protein uL3 from Streptococcus pyogenes serotype M6 (strain ATCC BAA-946 / MGAS10394).